The sequence spans 225 residues: Probable septum site-determining protein MinC (225 aa).

The protein belongs to the MinC family. In terms of assembly, interacts with MinD and FtsZ.

Cell division inhibitor that blocks the formation of polar Z ring septums. Rapidly oscillates between the poles of the cell to destabilize FtsZ filaments that have formed before they mature into polar Z rings. Prevents FtsZ polymerization. The sequence is that of Probable septum site-determining protein MinC from Listeria monocytogenes serotype 4a (strain HCC23).